Here is a 1742-residue protein sequence, read N- to C-terminus: NACHT and WD repeat domain-containing protein 2 (1742 aa).

5 LRR repeats span residues 386-410, 677-698, 724-747, 883-906, and 925-953; these read FYEY…GHIN, LEDV…TRPS, VKNV…LYLQ, YSQE…VTAF, and LPKL…SSMD. Positions 410 to 737 constitute an NACHT domain; that stretch reads NPLIIYGGPC…TLLVWANRHL (328 aa). WD repeat units lie at residues 963-1004, 1007-1046, 1140-1179, 1229-1271, 1272-1311, 1314-1353, 1355-1394, 1396-1434, 1476-1516, 1522-1564, and 1614-1653; these read LSSS…LLRQ, TAQS…LLSE, FSGG…SPQL, KHNE…ASLQ, EISG…AMSN, KTGK…IEAV, KHEG…NLFR, NGQR…RVCN, EDGT…ICRR, NFLK…VHAS, and SLYK…DAAL.

The sequence is that of NACHT and WD repeat domain-containing protein 2 (NWD2) from Homo sapiens (Human).